A 544-amino-acid polypeptide reads, in one-letter code: Chaperonin GroEL 2 (544 aa).

ATP contacts are provided by residues 29-32 (TLGP), lysine 50, 86-90 (DGTTT), glycine 414, and aspartate 494.

It belongs to the chaperonin (HSP60) family. Forms a cylinder of 14 subunits composed of two heptameric rings stacked back-to-back. Interacts with the co-chaperonin GroES.

It is found in the cytoplasm. It carries out the reaction ATP + H2O + a folded polypeptide = ADP + phosphate + an unfolded polypeptide.. In terms of biological role, together with its co-chaperonin GroES, plays an essential role in assisting protein folding. The GroEL-GroES system forms a nano-cage that allows encapsulation of the non-native substrate proteins and provides a physical environment optimized to promote and accelerate protein folding. This Psychromonas ingrahamii (strain DSM 17664 / CCUG 51855 / 37) protein is Chaperonin GroEL 2.